Consider the following 467-residue polypeptide: Heat shock factor protein 3 (467 aa).

A DNA-binding region spans residues 16-121; sequence VPGFLAKLWA…LLENIKRKVS (106 aa). Positions 128–201 are hydrophobic repeat HR-A/B; the sequence is LKVCAEDLHK…LSLMRGNYIV (74 aa). The tract at residues 364–389 is hydrophobic repeat HR-C; sequence IQDFLNCIDASLEELQAMLSGKQYSF. The segment at 427-449 is disordered; the sequence is EDLGASERETAGSKGGQEGTESC.

It belongs to the HSF family. Homotrimer. Expressed in most tissues. High levels are found in erythrocytes and low levels in liver.

The protein resides in the cytoplasm. It is found in the nucleus. Functionally, DNA-binding protein that specifically binds heat shock promoter elements (HSE) and activates transcription. HSF3 binds DNA constitutively only when the C-terminal region is deleted. This is Heat shock factor protein 3 (HSF3) from Gallus gallus (Chicken).